Reading from the N-terminus, the 349-residue chain is Protein Wnt-7b (349 aa).

The signal sequence occupies residues M1–G24. 5 disulfide bridges follow: C73/C84, C123/C131, C133/C152, C200/C214, and C202/C209. N-linked (GlcNAc...) asparagine glycans are attached at residues N83 and N127. A lipid anchor (O-palmitoleoyl serine; by PORCN) is attached at S206. A disordered linker region spans residues V238 to T266. Intrachain disulfides connect C278/C309, C294/C304, C308/C348, C324/C339, C326/C336, and C331/C332. A glycan (N-linked (GlcNAc...) asparagine) is linked at N295.

It belongs to the Wnt family. As to quaternary structure, forms a soluble 1:1 complex with AFM; this prevents oligomerization and is required for prolonged biological activity. The complex with AFM may represent the physiological form in body fluids. Interacts with FZD1 and FZD10. Interacts with FZD4 (in vitro). Interacts with PORCN. Interacts with glypican GPC3. Interacts (via intrinsically disordered linker region) with RECK; interaction with RECK confers ligand selectivity for Wnt7 in brain endothelial cells and allows these cells to selectively respond to Wnt7. In terms of processing, palmitoleoylation is required for efficient binding to frizzled receptors. Depalmitoleoylation leads to Wnt signaling pathway inhibition.

It localises to the secreted. The protein localises to the extracellular space. It is found in the extracellular matrix. In terms of biological role, ligand for members of the frizzled family of seven transmembrane receptors that functions in the canonical Wnt/beta-catenin signaling pathway. Required for normal fusion of the chorion and the allantois during placenta development. Required for central nervous system (CNS) angiogenesis and blood-brain barrier regulation. In Mus musculus (Mouse), this protein is Protein Wnt-7b (Wnt7b).